We begin with the raw amino-acid sequence, 35 residues long: Turripeptide gsp9a (35 aa).

2 positions are modified to 4-hydroxyproline: Pro-3 and Pro-4. Disulfide bonds link Cys-7/Cys-22, Cys-12/Cys-26, and Cys-18/Cys-33. 4-carboxyglutamate occurs at positions 14 and 17.

As to expression, expressed by the venom duct.

It is found in the secreted. This chain is Turripeptide gsp9a, found in Gemmula speciosa (Splendid gem-turris).